A 337-amino-acid polypeptide reads, in one-letter code: MDSTNSISLAEAVKIAEARFKAAVQGCKDDWHNGNDLVILQDNIPQLFGGILIEHFKHCVGEVSGFPVELTVMDSGNSNYHTLVQMPKNNMRLSQVASSPKSAKTSPSEQASINLRAVAAGLKKAPRPMNCWIIFRDAMHKHLRAEFPHLTIQEISTQCSQIWHNLSPEAKRPWQDAAQSAKEEHLRQHPNYKYTPRKPGEKKKRQSRKSKRAAATTTAPEVLQFQLSPNLIPTVPEVTDQPPLTANPVAATGDSPCPEDVLNYFDPNIFPEIYPQAPMAADFFYNAESIRHGLLDAEFDIDFNMDTTFALFDDEMLAFRDGADGDATLPSSFQDTY.

The HMG box DNA-binding region spans 125–193; the sequence is APRPMNCWII…EHLRQHPNYK (69 aa). The interval 171–219 is disordered; it reads KRPWQDAAQSAKEEHLRQHPNYKYTPRKPGEKKKRQSRKSKRAAATTTA. The segment covering 200–212 has biased composition (basic residues); that stretch reads GEKKKRQSRKSKR.

It localises to the nucleus. The protein is Mating-type protein MAT-2 (MAT2) of Cochliobolus sativus (Common root rot and spot blotch fungus).